The primary structure comprises 227 residues: Cytochrome c oxidase subunit 2 (227 aa).

Topologically, residues 1 to 14 (MAYPMQLGLQDATS) are mitochondrial intermembrane. Residues 15–45 (PIMEELTDFHDHTLMIVFLISTLVLYIISLM) form a helical membrane-spanning segment. The Mitochondrial matrix segment spans residues 46 to 59 (LTTKLTHTNTMDAQ). Residues 60 to 87 (EVETVWTILPAIILIMIALPSLRILYMM) form a helical membrane-spanning segment. The Mitochondrial intermembrane portion of the chain corresponds to 88-227 (DEINDPYLTV…QFESWTSSMT (140 aa)). Cu cation-binding residues include His-161, Cys-196, Glu-198, Cys-200, His-204, and Met-207. Glu-198 contacts Mg(2+).

It belongs to the cytochrome c oxidase subunit 2 family. In terms of assembly, component of the cytochrome c oxidase (complex IV, CIV), a multisubunit enzyme composed of 14 subunits. The complex is composed of a catalytic core of 3 subunits MT-CO1, MT-CO2 and MT-CO3, encoded in the mitochondrial DNA, and 11 supernumerary subunits COX4I, COX5A, COX5B, COX6A, COX6B, COX6C, COX7A, COX7B, COX7C, COX8 and NDUFA4, which are encoded in the nuclear genome. The complex exists as a monomer or a dimer and forms supercomplexes (SCs) in the inner mitochondrial membrane with NADH-ubiquinone oxidoreductase (complex I, CI) and ubiquinol-cytochrome c oxidoreductase (cytochrome b-c1 complex, complex III, CIII), resulting in different assemblies (supercomplex SCI(1)III(2)IV(1) and megacomplex MCI(2)III(2)IV(2)). Found in a complex with TMEM177, COA6, COX18, COX20, SCO1 and SCO2. Interacts with TMEM177 in a COX20-dependent manner. Interacts with COX20. Interacts with COX16. It depends on Cu cation as a cofactor.

The protein resides in the mitochondrion inner membrane. The catalysed reaction is 4 Fe(II)-[cytochrome c] + O2 + 8 H(+)(in) = 4 Fe(III)-[cytochrome c] + 2 H2O + 4 H(+)(out). Functionally, component of the cytochrome c oxidase, the last enzyme in the mitochondrial electron transport chain which drives oxidative phosphorylation. The respiratory chain contains 3 multisubunit complexes succinate dehydrogenase (complex II, CII), ubiquinol-cytochrome c oxidoreductase (cytochrome b-c1 complex, complex III, CIII) and cytochrome c oxidase (complex IV, CIV), that cooperate to transfer electrons derived from NADH and succinate to molecular oxygen, creating an electrochemical gradient over the inner membrane that drives transmembrane transport and the ATP synthase. Cytochrome c oxidase is the component of the respiratory chain that catalyzes the reduction of oxygen to water. Electrons originating from reduced cytochrome c in the intermembrane space (IMS) are transferred via the dinuclear copper A center (CU(A)) of subunit 2 and heme A of subunit 1 to the active site in subunit 1, a binuclear center (BNC) formed by heme A3 and copper B (CU(B)). The BNC reduces molecular oxygen to 2 water molecules using 4 electrons from cytochrome c in the IMS and 4 protons from the mitochondrial matrix. In Cratogeomys castanops (Yellow-faced pocket gopher), this protein is Cytochrome c oxidase subunit 2 (MT-CO2).